The chain runs to 101 residues: Apolipoprotein C-II (101 aa).

The first 22 residues, methionine 1–glycine 22, serve as a signal peptide directing secretion. Positions threonine 66 to isoleucine 74 are lipid binding. Residues serine 78–aspartate 101 are lipoprotein lipase cofactor.

The protein belongs to the apolipoprotein C2 family. Proapolipoprotein C-II is synthesized as a sialic acid containing glycoprotein which is subsequently desialylated prior to its proteolytic processing. Post-translationally, proapolipoprotein C-II, the major form found in plasma undergoes proteolytic cleavage of its N-terminal hexapeptide to generate apolipoprotein C-II, which occurs as the minor form in plasma.

It localises to the secreted. In terms of biological role, component of chylomicrons, very low-density lipoproteins (VLDL), low-density lipoproteins (LDL), and high-density lipoproteins (HDL) in plasma. Plays an important role in lipoprotein metabolism as an activator of lipoprotein lipase. Both proapolipoprotein C-II and apolipoprotein C-II can activate lipoprotein lipase. The polypeptide is Apolipoprotein C-II (APOC2) (Capra hircus aegagrus (Wild goat)).